The primary structure comprises 444 residues: Trigger factor (444 aa).

Positions 166–251 (GDQIVIDFKG…VKAVKAPKAA (86 aa)) constitute a PPIase FKBP-type domain.

Belongs to the FKBP-type PPIase family. Tig subfamily.

The protein localises to the cytoplasm. It catalyses the reaction [protein]-peptidylproline (omega=180) = [protein]-peptidylproline (omega=0). Its function is as follows. Involved in protein export. Acts as a chaperone by maintaining the newly synthesized protein in an open conformation. Functions as a peptidyl-prolyl cis-trans isomerase. This Paracoccus denitrificans (strain Pd 1222) protein is Trigger factor.